The following is a 491-amino-acid chain: Phosphatidylglycerol--prolipoprotein diacylglyceryl transferase (491 aa).

Helical transmembrane passes span 24-44 (IPLR…IWWG), 58-78 (VLDV…AYHV), and 98-118 (IWQG…GAWI). Arg146 contributes to the a 1,2-diacyl-sn-glycero-3-phospho-(1'-sn-glycerol) binding site. The next 2 membrane-spanning stretches (helical) occupy residues 192 to 212 (IVHP…IALV) and 256 to 276 (INNF…VFAT). The segment covering 309-323 (NGPAEPGATASTATD) has biased composition (low complexity). The tract at residues 309 to 491 (NGPAEPGATA…DRVDSGENDA (183 aa)) is disordered. Residues 347–360 (KGDRGTADAADTAK) are compositionally biased toward basic and acidic residues. Low complexity-rich tracts occupy residues 361–387 (DASA…GSSD), 394–406 (AVKA…AAEK), and 415–438 (AGEA…SAKS). The span at 453-462 (NESESTRDNE) shows a compositional bias: basic and acidic residues. Residues 463-481 (STSAGTAASATGSAGAGAT) show a composition bias toward low complexity. Residues 482–491 (DRVDSGENDA) show a composition bias toward basic and acidic residues.

Belongs to the Lgt family.

It is found in the cell membrane. The enzyme catalyses L-cysteinyl-[prolipoprotein] + a 1,2-diacyl-sn-glycero-3-phospho-(1'-sn-glycerol) = an S-1,2-diacyl-sn-glyceryl-L-cysteinyl-[prolipoprotein] + sn-glycerol 1-phosphate + H(+). It functions in the pathway protein modification; lipoprotein biosynthesis (diacylglyceryl transfer). Catalyzes the transfer of the diacylglyceryl group from phosphatidylglycerol to the sulfhydryl group of the N-terminal cysteine of a prolipoprotein, the first step in the formation of mature lipoproteins. This Nocardia farcinica (strain IFM 10152) protein is Phosphatidylglycerol--prolipoprotein diacylglyceryl transferase.